Reading from the N-terminus, the 379-residue chain is MASRNIWCVRRNFLFDLRGWMLQYSAEVFLKSISFRTFSVECDSKDKESLEEEREDLLSNLVTMGVDIDMARRRQPGVFNKAVTNEQELKIFLLSKGASDKVIGSIISRYPRAITRTPESLSKRWDLWRKIMASDLEIVNILERSPESFFRSNNNLNLENNIKFLCSVGLTHKCLCRLLTNAPRTFSNSLNLNKQMVEFLQETGMSLGHNDPRDFVRKIISKNPSILIQSTKRVKTNIEFLQSTFNLNKQDLLLLICGPGARILDLSNDCTKKNYTNIRERLLSLGCSEEEVQRFVLSYLNMVFLSEKKFNDKIDCLIEEKISASQIIENPRILDSSINTLKTRIRELSHAGYDLSTSSIALLSWSQRRYEAKLKRLCG.

A mitochondrion-targeting transit peptide spans 1 to 37; it reads MASRNIWCVRRNFLFDLRGWMLQYSAEVFLKSISFRT. Interaction with DNA regions lie at residues 151-152, 229-233, 306-313, 337-340, and 366-373; these read RS, QSTKR, SEKKFNDK, SINT, and SQRRYEAK.

The protein belongs to the mTERF family. Monomer. Post-translationally, phosphoprotein with mostly four phosphate groups. While the DNA-binding activity is unaffected by the phosphorylation state, only the phosphorylated form of the protein is active for termination activity. Functioning seems to be regulated by phosphorylation. Expressed strongly in the heart and at lower levels in brain, liver and kidney.

The protein localises to the mitochondrion. Transcription termination factor. Binds to a 28 bp region within the tRNA(Leu(uur)) gene at a position immediately adjacent to and downstream of the 16S rRNA gene; this region comprises a tridecamer sequence critical for directing accurate termination. Binds DNA along the major grove and promotes DNA bending and partial unwinding. Promotes base flipping. Transcription termination activity appears to be polarized with highest specificity for transcripts initiated on the light strand. The polypeptide is Transcription termination factor 1b, mitochondrial (Mus musculus (Mouse)).